The primary structure comprises 520 residues: Peptide chain release factor 3 (520 aa).

The 270-residue stretch at 8–277 folds into the tr-type G domain; the sequence is ESRKTFAIIS…FAPMPNARQT (270 aa). Residues 17–24, 85–89, and 139–142 contribute to the GTP site; these read SHPDAGKT, DTPGH, and NKLD.

It belongs to the TRAFAC class translation factor GTPase superfamily. Classic translation factor GTPase family. PrfC subfamily.

It localises to the cytoplasm. Functionally, increases the formation of ribosomal termination complexes and stimulates activities of RF-1 and RF-2. It binds guanine nucleotides and has strong preference for UGA stop codons. It may interact directly with the ribosome. The stimulation of RF-1 and RF-2 is significantly reduced by GTP and GDP, but not by GMP. This chain is Peptide chain release factor 3, found in Staphylococcus aureus (strain USA300 / TCH1516).